We begin with the raw amino-acid sequence, 616 residues long: Coagulation factor XII (616 aa).

The first 19 residues, 1–19 (MRALLLLGILLVSLESALL), serve as a signal peptide directing secretion. The Fibronectin type-II domain maps to 42 to 90 (VTGEPCHFPFQYYRQLYYKCIQRGQRGPRPWCATTPNFEKDQRWAYCLE). 13 disulfides stabilise this stretch: cysteine 47–cysteine 73, cysteine 61–cysteine 88, cysteine 98–cysteine 110, cysteine 104–cysteine 119, cysteine 121–cysteine 130, cysteine 135–cysteine 163, cysteine 161–cysteine 170, cysteine 178–cysteine 189, cysteine 183–cysteine 198, cysteine 200–cysteine 209, cysteine 217–cysteine 295, cysteine 238–cysteine 277, and cysteine 266–cysteine 290. The EGF-like 1 domain maps to 94-131 (VKDHCNKGNPCQKGGTCVNMPNGPHCICPDHFTGKHCQ). Residue threonine 109 is glycosylated (O-linked (Fuc) threonine). One can recognise a Fibronectin type-I domain in the interval 133 to 173 (EKCFEPQFLQFFQENEIWHRFEPAGVSKCQCKGPKAQCKPV). An EGF-like 2 domain is found at 174 to 210 (ASQVCSTNPCLNGGSCLQTEGHRLCRCPTGYAGRLCD). A Kringle domain is found at 216 to 295 (RCYSDRGLSY…SWQYCRLARC (80 aa)). Residues asparagine 249, asparagine 271, and asparagine 335 are each glycosylated (N-linked (GlcNAc...) asparagine). The tract at residues 303–342 (PPILTPTQSPSEHQDSPLLSREPQPTTQTPSQNLTSAWCA) is disordered. Over residues 325 to 338 (PQPTTQTPSQNLTS) the composition is skewed to polar residues. 7 disulfide bridges follow: cysteine 358–cysteine 485, cysteine 396–cysteine 412, cysteine 404–cysteine 474, cysteine 435–cysteine 438, cysteine 501–cysteine 570, cysteine 533–cysteine 549, and cysteine 560–cysteine 591. Positions 372–615 (IVGGLVALPG…YLAWIQEHTT (244 aa)) constitute a Peptidase S1 domain. Histidine 411 serves as the catalytic Charge relay system. Asparagine 432 carries an N-linked (GlcNAc...) asparagine glycan. Residue aspartate 460 is the Charge relay system of the active site. Serine 564 acts as the Charge relay system in catalysis.

Belongs to the peptidase S1 family. In terms of assembly, interacts with HRG; the interaction, which is enhanced in the presence of zinc ions and inhibited by heparin-binding, inhibits factor XII autoactivation and contact-initiated coagulation. In terms of processing, O- and N-glycosylated.

The protein localises to the secreted. It carries out the reaction Selective cleavage of Arg-|-Ile bonds in factor VII to form factor VIIa and factor XI to form factor XIa.. Its activity is regulated as follows. Activity is promoted in the presence of negatively charged surfaces. Factor XII is a serum glycoprotein that participates in the initiation of blood coagulation, fibrinolysis, and the generation of bradykinin and angiotensin. Prekallikrein is cleaved by factor XII to form kallikrein, which then cleaves factor XII first to alpha-factor XIIa and then trypsin cleaves it to beta-factor XIIa. Alpha-factor XIIa activates factor XI to factor XIa. This chain is Coagulation factor XII (F12), found in Sus scrofa (Pig).